A 441-amino-acid polypeptide reads, in one-letter code: Peroxisome proliferator-activated receptor delta (441 aa).

Residues 1–22 show a composition bias toward acidic residues; sequence MEQPQEEAPEVREEEEKEEVAE. Residues 1-54 form a disordered region; sequence MEQPQEEAPEVREEEEKEEVAEAEGAPELNGGPQHALPSSSYTDLSRSSSPPSL. Positions 37–54 are enriched in low complexity; the sequence is LPSSSYTDLSRSSSPPSL. A DNA-binding region (nuclear receptor) is located at residues 71-145; the sequence is NMECRVCGDK…LGMSHNAIRF (75 aa). 2 consecutive NR C4-type zinc fingers follow at residues 74-94 and 111-133; these read CRVC…CEGC and CERS…FQKC. The NR LBD domain occupies 211–439; it reads FVIHDIETLW…HPLLQEIYKD (229 aa).

Belongs to the nuclear hormone receptor family. NR1 subfamily. Heterodimer with the retinoid X receptor. Interacts (via domain NR LBD) with CRY1 and CRY2 in a ligand-dependent manner. Post-translationally, 'Lys-48'-linked polyubiquitinated; leading to proteasomal degradation. Deubiquitinated and stabilized by OTUD3. Ubiquitous with maximal levels in placenta and skeletal muscle.

The protein resides in the nucleus. Ligand-activated transcription factor key mediator of energy metabolism in adipose tissues. Receptor that binds peroxisome proliferators such as hypolipidemic drugs and fatty acids. Has a preference for poly-unsaturated fatty acids, such as gamma-linoleic acid and eicosapentanoic acid. Once activated by a ligand, the receptor binds to promoter elements of target genes. Regulates the peroxisomal beta-oxidation pathway of fatty acids. Functions as transcription activator for the acyl-CoA oxidase gene. Decreases expression of NPC1L1 once activated by a ligand. This chain is Peroxisome proliferator-activated receptor delta, found in Homo sapiens (Human).